A 260-amino-acid polypeptide reads, in one-letter code: Methionine-rich nacre protein (260 aa).

The signal sequence occupies residues 1 to 19 (MRRILCLAVVIFIINDVSS). The interval 23-75 (GSNKNWKKSGMSLSSPGNKKPTGNNNAVPQKSKMNNVNQNSLSQPKRPSHPGN) is disordered. Over residues 33–68 (MSLSSPGNKKPTGNNNAVPQKSKMNNVNQNSLSQPK) the composition is skewed to polar residues.

Expressed in mantle distal zone, mantle margin and grafted pearl pockets. Not expressed in adductor muscle, gills, hemocytes or ungrafted pearl pockets. Within the mantle, specifically expressed in mineralizing outer epithelium cells (at protein level). After secretion incorporated into acid-insoluble nacre matrix of shell and pearl (at protein level). Not found in acid-insoluble matrix of shell prisms (at protein level).

Its subcellular location is the secreted. The chain is Methionine-rich nacre protein from Margaritifera margaritifera (Freshwater pearl mussel).